A 229-amino-acid polypeptide reads, in one-letter code: Transcriptional activator protein IrlR (229 aa).

The Response regulatory domain occupies 2–115; that stretch reads RILIVEDEPK…ELVARVRSIL (114 aa). At Asp-51 the chain carries 4-aspartylphosphate. Residues 123–221 constitute a DNA-binding region (ompR/PhoB-type); sequence STVLRIADLE…VRGMGYVLEV (99 aa).

In terms of processing, phosphorylated by IrlS.

Its function is as follows. Member of the two-component regulatory system IrlR/IrlS. May be involved in invasion of eukaryotic cells and heavy-metal resistance. In Burkholderia pseudomallei (strain 1026b), this protein is Transcriptional activator protein IrlR (irlR).